The sequence spans 147 residues: MKVLLIKDVKGLGKAGEVKDVKDGYGNNFLIGKGLAKSATDAVLKQYEAAKKRAQEEINYEINQNEKLKAELENIKIIIKTKLGANGALFGSITKDEIANALKEQKGYEVDKKALECDHIKATGIYDVALKLKHGISAKFKVEVAGE.

Belongs to the bacterial ribosomal protein bL9 family.

Functionally, binds to the 23S rRNA. This is Large ribosomal subunit protein bL9 from Campylobacter fetus subsp. fetus (strain 82-40).